A 390-amino-acid chain; its full sequence is Phosphopentomutase (390 aa).

Mn(2+) contacts are provided by aspartate 12, aspartate 285, histidine 290, aspartate 326, histidine 327, and histidine 338.

It belongs to the phosphopentomutase family. Mn(2+) is required as a cofactor.

The protein localises to the cytoplasm. The catalysed reaction is 2-deoxy-alpha-D-ribose 1-phosphate = 2-deoxy-D-ribose 5-phosphate. It carries out the reaction alpha-D-ribose 1-phosphate = D-ribose 5-phosphate. It participates in carbohydrate degradation; 2-deoxy-D-ribose 1-phosphate degradation; D-glyceraldehyde 3-phosphate and acetaldehyde from 2-deoxy-alpha-D-ribose 1-phosphate: step 1/2. Isomerase that catalyzes the conversion of deoxy-ribose 1-phosphate (dRib-1-P) and ribose 1-phosphate (Rib-1-P) to deoxy-ribose 5-phosphate (dRib-5-P) and ribose 5-phosphate (Rib-5-P), respectively. The protein is Phosphopentomutase of Brevibacillus brevis (strain 47 / JCM 6285 / NBRC 100599).